We begin with the raw amino-acid sequence, 388 residues long: LL-diaminopimelate aminotransferase (388 aa).

The substrate site is built by Y16 and G41. Pyridoxal 5'-phosphate-binding positions include Y70, 104–105, Y129, N179, Y210, and 239–241; these read SK and SLS. Positions 105, 129, and 179 each coordinate substrate. Residue K242 is modified to N6-(pyridoxal phosphate)lysine. R250 provides a ligand contact to pyridoxal 5'-phosphate. R368 is a substrate binding site.

This sequence belongs to the class-I pyridoxal-phosphate-dependent aminotransferase family. LL-diaminopimelate aminotransferase subfamily. As to quaternary structure, homodimer. Requires pyridoxal 5'-phosphate as cofactor.

It catalyses the reaction (2S,6S)-2,6-diaminopimelate + 2-oxoglutarate = (S)-2,3,4,5-tetrahydrodipicolinate + L-glutamate + H2O + H(+). It functions in the pathway amino-acid biosynthesis; L-lysine biosynthesis via DAP pathway; LL-2,6-diaminopimelate from (S)-tetrahydrodipicolinate (aminotransferase route): step 1/1. Involved in the synthesis of meso-diaminopimelate (m-DAP or DL-DAP), required for both lysine and peptidoglycan biosynthesis. Catalyzes the direct conversion of tetrahydrodipicolinate to LL-diaminopimelate. In Maridesulfovibrio salexigens (strain ATCC 14822 / DSM 2638 / NCIMB 8403 / VKM B-1763) (Desulfovibrio salexigens), this protein is LL-diaminopimelate aminotransferase.